The chain runs to 1020 residues: C protein alpha-antigen (1020 aa).

The first 41 residues, 1-41, serve as a signal peptide directing secretion; that stretch reads MFRRSKNNSYDTSQTKQRFSIKKFKFGAASVLIGLSFLGGV. A 9 X 82 AA tandem repeats region spans residues 227–964; it reads VPDKDKYDPT…EVTVHVTPKP (738 aa). 16 disordered regions span residues 261 to 281, 306 to 330, 342 to 363, 388 to 445, 470 to 494, 506 to 527, 552 to 576, 588 to 610, 634 to 658, 670 to 692, 716 to 740, 752 to 774, 798 to 822, 834 to 856, 880 to 904, and 962 to 989; these read DGSKGVPTVVGDRPDTNVPGD, PKPVPDKDKYDPTGGETTVPQGTPV, PDGSKGVPTVVGDRPDTNVPGD, PKPV…VPGD, PDGSKGVPTVVGDRPDTNVPGDH, and PKPVPDKDKYDPTGKAQQVNGKGNKLPA. Positions 272–281 are enriched in basic and acidic residues; the sequence is DRPDTNVPGD. Over residues 320–329 the composition is skewed to polar residues; the sequence is GETTVPQGTP. The span at 354–363 shows a compositional bias: basic and acidic residues; sequence DRPDTNVPGD. The span at 402 to 411 shows a compositional bias: polar residues; the sequence is GETTVPQGTP. The segment covering 436–445 has biased composition (basic and acidic residues); sequence DRPDTNVPGD. Polar residues predominate over residues 484-493; the sequence is GETTVPQGTP. Positions 518-527 are enriched in basic and acidic residues; sequence DRPDTNVPGD. Positions 566–575 are enriched in polar residues; sequence GETTVPQGTP. The segment covering 600-610 has biased composition (basic and acidic residues); that stretch reads DRPDTNVPGDH. The span at 648 to 657 shows a compositional bias: polar residues; the sequence is GETTVPQGTP. Basic and acidic residues predominate over residues 682–692; it reads DRPDTNVPGDH. The segment covering 730–739 has biased composition (polar residues); sequence GETTVPQGTP. Positions 764–774 are enriched in basic and acidic residues; the sequence is DRPDTNVPGDH. Residues 812 to 821 are compositionally biased toward polar residues; sequence GETTVPQGTP. Positions 846 to 856 are enriched in basic and acidic residues; that stretch reads DRPDTNVPGDH. Residues 894-903 show a composition bias toward polar residues; the sequence is GETTVPQGTP. Positions 987–991 match the LPXTG sorting signal motif; that stretch reads LPATG. T990 is modified (pentaglycyl murein peptidoglycan amidated threonine). The propeptide at 991–1020 is removed by sortase; it reads GENATPFFNVAALTIISSVGLLSVSKKKED.

The protein resides in the secreted. Its subcellular location is the cell wall. Its function is as follows. May play a role in both virulence and immunity. The chain is C protein alpha-antigen (bca) from Streptococcus agalactiae serotype Ia (strain ATCC 27591 / A909 / CDC SS700).